We begin with the raw amino-acid sequence, 317 residues long: 1-phosphatidylinositol phosphodiesterase (317 aa).

The N-terminal stretch at 1–22 is a signal peptide; the sequence is MYKNYLQRTLVLLLCFILYFFT. The 139-residue stretch at 58-196 folds into the PI-PLC X-box domain; sequence LAALSIPGTH…LKDVRGKILL (139 aa). Histidine 67 acts as the Proton acceptor in catalysis. Histidine 115 acts as the Proton donor in catalysis.

In terms of assembly, monomer.

It localises to the secreted. Its subcellular location is the cytoplasm. It carries out the reaction a 1,2-diacyl-sn-glycero-3-phospho-(1D-myo-inositol) = 1D-myo-inositol 1,2-cyclic phosphate + a 1,2-diacyl-sn-glycerol. In terms of biological role, cleaves glycosylphosphatidylinositol (GPI) and phosphatidylinositol (PI) anchors but not PI phosphates. Important factor in pathogenesis, PI-PLC activity is present only in virulent listeria species. It may participate in the lysis of the phagolysosomal membrane. This Listeria monocytogenes serovar 1/2a (strain ATCC BAA-679 / EGD-e) protein is 1-phosphatidylinositol phosphodiesterase (plcA).